A 553-amino-acid chain; its full sequence is Putative transport protein KPK_0013 (553 aa).

The next 5 membrane-spanning stretches (helical) occupy residues 4–24, 28–48, 65–85, 95–115, and 158–178; these read IALT…IGNV, GVGF…HFVD, FGLI…FFAS, LFAI…HKLF, and MSYA…MWLV. 2 consecutive RCK C-terminal domains span residues 192–276 and 279–361; these read RFEE…VIGQ and ATSL…ELGN. 6 consecutive transmembrane segments (helical) span residues 371 to 391, 403 to 425, 437 to 457, 464 to 484, 493 to 513, and 532 to 552; these read MLPV…PLFI, AGGP…LYWF, LGIV…FVAT, LSWI…VGIL, YLTL…LAFA, and PLVM…FWGL.

Belongs to the AAE transporter (TC 2.A.81) family. YidE subfamily.

The protein resides in the cell membrane. This chain is Putative transport protein KPK_0013, found in Klebsiella pneumoniae (strain 342).